We begin with the raw amino-acid sequence, 100 residues long: Aspartyl/glutamyl-tRNA(Asn/Gln) amidotransferase subunit C (100 aa).

The protein belongs to the GatC family. Heterotrimer of A, B and C subunits.

It carries out the reaction L-glutamyl-tRNA(Gln) + L-glutamine + ATP + H2O = L-glutaminyl-tRNA(Gln) + L-glutamate + ADP + phosphate + H(+). The enzyme catalyses L-aspartyl-tRNA(Asn) + L-glutamine + ATP + H2O = L-asparaginyl-tRNA(Asn) + L-glutamate + ADP + phosphate + 2 H(+). In terms of biological role, allows the formation of correctly charged Asn-tRNA(Asn) or Gln-tRNA(Gln) through the transamidation of misacylated Asp-tRNA(Asn) or Glu-tRNA(Gln) in organisms which lack either or both of asparaginyl-tRNA or glutaminyl-tRNA synthetases. The reaction takes place in the presence of glutamine and ATP through an activated phospho-Asp-tRNA(Asn) or phospho-Glu-tRNA(Gln). In Streptococcus pneumoniae (strain P1031), this protein is Aspartyl/glutamyl-tRNA(Asn/Gln) amidotransferase subunit C.